We begin with the raw amino-acid sequence, 800 residues long: MKLVIVESPAKAKTINKYLGDEFKVIASFGHIRDLPSKKGSVIPDENFSMKYDISEKAGKYVDAIIKDAKKAESVYLATDPDREGESISWHIAEVIKEKNKVKSDDFFKRVAFNEITKKAITHAIENPRKLDNNLVNAQQARRALDYLVGFTLSPLLWRKLPGCKSAGRVQSVALRLICEREDEIERFKSEEYWDISLKMLNSNNELFTAKLTHINDQKLEKFSITNDKEAKDLTEKLKSQNFHVDKIEKKQQKRQPQPPFITSSLQQEAARKLGFSAKKTMQIAQKLYEGVDIGKETIGLITYMRTDGVTLSNDAVDEIRKLINKDYGDKYLPSSPRIYKSKVKNAQEAHEAIRPTNINYIPNDLKEKLEKDYYKLYELIWKRTIACQMENVIMDLVNATLASENKEYLARANGSTIAFDGFYKVYRESIDDEAEEENKMLPPLKEQEHLKTKEIIPNQHFTEPPPRYSEASLVKKLEELGIGRPSTYATILSVLQDRKYVTLEKKRFIPEELGRLVTVFLVGFFKKYVEYDFTAGLENELDEIAAGKLEWKSALGNFWNGFNHNIESVNKQNITEIISYVQQALDYHIFGENKDSKVCPSCKTGELSLKLGKFGAFLACSNYPECNFRKSIVSGNDNNEADGEAKDIVNENKVLGKDKEGIEIYLKKGPYGPYIQYGEQVDSKIKPKRSPLPAGLNQNDITLDMALKLLSLPLKIGNHKESGEEVLVGYGKFGPYIKYMGKFISIPKKYDFLNLSLDDAMKLIEEKLNAIAAKQPNPLNMDEVTNLVDKKIKVKKTKK.

The Toprim domain maps to 1-111 (MKLVIVESPA…VKSDDFFKRV (111 aa)). The Mg(2+) site is built by Glu-7 and Asp-80. The 437-residue stretch at 132–568 (DNNLVNAQQA…FWNGFNHNIE (437 aa)) folds into the Topo IA-type catalytic domain. Residues 166–171 (SAGRVQ) form an interaction with DNA region. Tyr-304 (O-(5'-phospho-DNA)-tyrosine intermediate) is an active-site residue. A C4-type zinc finger spans residues 600 to 627 (CPSCKTGELSLKLGKFGAFLACSNYPEC).

The protein belongs to the type IA topoisomerase family. As to quaternary structure, monomer. Mg(2+) serves as cofactor.

It carries out the reaction ATP-independent breakage of single-stranded DNA, followed by passage and rejoining.. Functionally, releases the supercoiling and torsional tension of DNA, which is introduced during the DNA replication and transcription, by transiently cleaving and rejoining one strand of the DNA duplex. Introduces a single-strand break via transesterification at a target site in duplex DNA. The scissile phosphodiester is attacked by the catalytic tyrosine of the enzyme, resulting in the formation of a DNA-(5'-phosphotyrosyl)-enzyme intermediate and the expulsion of a 3'-OH DNA strand. The free DNA strand then undergoes passage around the unbroken strand, thus removing DNA supercoils. Finally, in the religation step, the DNA 3'-OH attacks the covalent intermediate to expel the active-site tyrosine and restore the DNA phosphodiester backbone. In Rickettsia bellii (strain RML369-C), this protein is DNA topoisomerase 1.